We begin with the raw amino-acid sequence, 179 residues long: MSKQNTYRLINPYIEGTTDTVVHSSNSFKAGKKLYGGISGYFTNHLDNFHMTIQNVQTGGLTHFRILEQRKNDGTVDYKLEKIDGEFSPDVDNKLLSSVAKLEQQKGGGSNDSSDSSDSETECFKFPLQPINRFVYFYLPYHKLNLVGLSPVDISRIFMPTFGFPFNPTIEIRFDLYKY.

The protein localises to the virion. This is an uncharacterized protein from Acanthamoeba polyphaga (Amoeba).